A 100-amino-acid chain; its full sequence is MHLMPREQEKLMIVVAADLARRRQSRGLKLNYPEAVAIISYELIEGARDGRTVADLMSYGTTILTREDVMEGVPEMIHDVQIEATFPDGTKLVTVHDPIR.

The protein belongs to the urease gamma subunit family. Heterotrimer of UreA (gamma), UreB (beta) and UreC (alpha) subunits. Three heterotrimers associate to form the active enzyme.

Its subcellular location is the cytoplasm. It catalyses the reaction urea + 2 H2O + H(+) = hydrogencarbonate + 2 NH4(+). It participates in nitrogen metabolism; urea degradation; CO(2) and NH(3) from urea (urease route): step 1/1. The sequence is that of Urease subunit gamma from Pseudarthrobacter chlorophenolicus (strain ATCC 700700 / DSM 12829 / CIP 107037 / JCM 12360 / KCTC 9906 / NCIMB 13794 / A6) (Arthrobacter chlorophenolicus).